Here is a 650-residue protein sequence, read N- to C-terminus: ATP-binding cassette sub-family G member 3 (650 aa).

At 1-387 (MASNNDPTVI…KNFKGFPWVT (387 aa)) the chain is on the cytoplasmic side. The ABC transporter domain occupies 37 to 279 (LSFHNISYQE…FRSAGYNYES (243 aa)). The ABC transmembrane type-2 domain occupies 381 to 644 (KGFPWVTVIQ…TITYVQLLQV (264 aa)). The helical transmembrane segment at 388–408 (VIQAIITVILATAVGTAFRVL) threads the bilayer. Over 409–420 (KNDCIEVQMRAG) the chain is Extracellular. The helical transmembrane segment at 421–441 (LLYLLTIFQCITSVSAGELFV) threads the bilayer. At 442 to 469 (IDRVRFLHEHTSGYYRVSSYFFGKLLAE) the chain is on the cytoplasmic side. Residues 470 to 490 (LIPRRLLPSTVFSLITYVIAG) traverse the membrane as a helical segment. At 491-498 (VKMSMKCF) the chain is on the extracellular side. A helical transmembrane segment spans residues 499-519 (FTMICTIMVLAYSASSLPLSI). Residues 520–527 (GAGENAVA) lie on the Cytoplasmic side of the membrane. A helical membrane pass occupies residues 528–548 (VPTLLVTIYFVFMLFFSGLSL). The Extracellular portion of the chain corresponds to 549-623 (YSGSFLPKLS…LSSWGFWENH (75 aa)). Residues 624-644 (LALVCTMIILLTITYVQLLQV) traverse the membrane as a helical segment. The Cytoplasmic portion of the chain corresponds to 645–648 (KNIR).

The protein belongs to the ABC transporter superfamily. ABCG family. Eye pigment precursor importer (TC 3.A.1.204) subfamily. In terms of assembly, may dimerize with another subunit to form a functional transporter. As to expression, highest levels of expression in thymus and spleen. Detected in lung and small intestine.

The protein resides in the membrane. The polypeptide is ATP-binding cassette sub-family G member 3 (Abcg3) (Mus musculus (Mouse)).